We begin with the raw amino-acid sequence, 185 residues long: uncharacterized protein (185 aa).

Belongs to the EUO family.

This is an uncharacterized protein from Chlamydia muridarum (strain MoPn / Nigg).